Here is an 89-residue protein sequence, read N- to C-terminus: Small ribosomal subunit protein uS14 (89 aa).

This sequence belongs to the universal ribosomal protein uS14 family. Part of the 30S ribosomal subunit. Contacts proteins S3 and S10.

Its function is as follows. Binds 16S rRNA, required for the assembly of 30S particles and may also be responsible for determining the conformation of the 16S rRNA at the A site. The protein is Small ribosomal subunit protein uS14 of Chlorobium luteolum (strain DSM 273 / BCRC 81028 / 2530) (Pelodictyon luteolum).